Here is a 162-residue protein sequence, read N- to C-terminus: MSIDRYHQQFTVSWDQLHRDVRALCHQLVERDFQGIVAITRGGLIPAALIARELNVRLVDTVCIKSYEHQDQGGLQVMKGIDHDGAGWLLVDDLVDTGNTARAVREMLPEAHFVTVYAKPEGRPLVDQYLTEVAQDCWIQFPWDMGVAYVEPLVDQVRSRDS.

5-phospho-alpha-D-ribose 1-diphosphate contacts are provided by residues 41–42 (RG) and 92–100 (DDLVDTGNT). Asp-93 provides a ligand contact to Mg(2+). Guanine contacts are provided by Asp-96 and Ile-139. Xanthine-binding residues include Asp-96 and Ile-139. Residues 96 to 100 (DTGNT) and 138 to 139 (WI) contribute to the GMP site.

It belongs to the purine/pyrimidine phosphoribosyltransferase family. XGPT subfamily. Homotetramer. It depends on Mg(2+) as a cofactor.

It is found in the cell inner membrane. The catalysed reaction is GMP + diphosphate = guanine + 5-phospho-alpha-D-ribose 1-diphosphate. The enzyme catalyses XMP + diphosphate = xanthine + 5-phospho-alpha-D-ribose 1-diphosphate. It carries out the reaction IMP + diphosphate = hypoxanthine + 5-phospho-alpha-D-ribose 1-diphosphate. The protein operates within purine metabolism; GMP biosynthesis via salvage pathway; GMP from guanine: step 1/1. Its pathway is purine metabolism; XMP biosynthesis via salvage pathway; XMP from xanthine: step 1/1. Its function is as follows. Purine salvage pathway enzyme that catalyzes the transfer of the ribosyl-5-phosphate group from 5-phospho-alpha-D-ribose 1-diphosphate (PRPP) to the N9 position of the 6-oxopurines guanine and xanthine to form the corresponding ribonucleotides GMP (guanosine 5'-monophosphate) and XMP (xanthosine 5'-monophosphate), with the release of PPi. To a lesser extent, also acts on hypoxanthine. The protein is Xanthine-guanine phosphoribosyltransferase of Chromohalobacter salexigens (strain ATCC BAA-138 / DSM 3043 / CIP 106854 / NCIMB 13768 / 1H11).